The sequence spans 179 residues: O-acetyl-ADP-ribose deacetylase (179 aa).

A Macro domain is found at Met-1–Gly-175. Substrate is bound by residues Asp-11–Ile-12, Asn-25, Gly-33–Asp-35, and Ser-122–Tyr-126. Asp-35 functions as the Proton acceptor in the catalytic mechanism.

Belongs to the MacroD-type family. YmdB subfamily. Homodimer. Interacts with RNase III.

The catalysed reaction is 3''-O-acetyl-ADP-D-ribose + H2O = ADP-D-ribose + acetate + H(+). The enzyme catalyses 2''-O-acetyl-ADP-D-ribose + H2O = ADP-D-ribose + acetate + H(+). In terms of biological role, deacetylates O-acetyl-ADP ribose to yield ADP-ribose and free acetate. Down-regulates ribonuclease 3 (RNase III) activity. Acts by interacting directly with the region of the ribonuclease that is required for dimerization/activation. This chain is O-acetyl-ADP-ribose deacetylase, found in Salmonella newport (strain SL254).